Reading from the N-terminus, the 71-residue chain is General transcription and DNA repair factor IIH subunit TFB5 (71 aa).

This sequence belongs to the TFB5 family. In terms of assembly, component of the 7-subunit TFIIH core complex composed of XPB, XPD, TFB1/GTF2H1, GTF2H2/P44, TFB4/GTF2H3, TFB2/GTF2H4 and TFB5/GTF2H5, which is active in NER. The core complex associates with the 3-subunit CDK-activating kinase (CAK) module composed of CYCH1/cyclin H1, CDKD and MAT1/At4g30820 to form the 10-subunit holoenzyme (holo-TFIIH) active in transcription.

It is found in the nucleus. Functionally, component of the general transcription and DNA repair factor IIH (TFIIH) core complex, which is involved in general and transcription-coupled nucleotide excision repair (NER) of damaged DNA and, when complexed to CAK, in RNA transcription by RNA polymerase II. In NER, TFIIH acts by opening DNA around the lesion to allow the excision of the damaged oligonucleotide and its replacement by a new DNA fragment. In transcription, TFIIH has an essential role in transcription initiation. When the pre-initiation complex (PIC) has been established, TFIIH is required for promoter opening and promoter escape. Phosphorylation of the C-terminal tail (CTD) of the largest subunit of RNA polymerase II by the kinase module CAK controls the initiation of transcription. This chain is General transcription and DNA repair factor IIH subunit TFB5, found in Arabidopsis thaliana (Mouse-ear cress).